A 1680-amino-acid chain; its full sequence is MGSRRAAGRGWGLGGRAGAGGDSEDDGPVWTPGPASRSYLLSVRPEASLSSNRLSHPSSGRSTFCSIIAQLTEETQPLFETTLKSRAVSEDSDVRFTCIVTGYPEPEVTWYKDDIELDRYCGLPKYEITHQGNRHTLQLYRCQEEDAAIYQASARNTKGIVSCSGVLEVGTMTEYKIHQRWFAKLKRKAAAKMREIEQSWKHGKEASGEADTLLRKISPDRFQRKRRLSGVEEAVLSTPVREMEEGSSAAWQEGETESAQHPGLGLINSFAPGEAPTNGEPAPENGEDEERGLLTYICEVMELGPQNSPPKESGAKKKRKDEESKPGEQKLELEKAEGSQCSSENVVPSTDKPNSSRREKSTDTQPAQTQPRGRVARGPGIESTRKTASVLGIQDKVQDVPAPAPAPVPAPALAPAPVPVPAPTPVPSRSSEQVYFSLKDMFMETTRAGRSQEEEKPPPPSTRVAGESPPGKTPVKSRLEKVPMVSSQPTSSMVPPPIKPLNRKRFAPPKSKVESTTTSLSSQTSESMAQSLGKALPSASTQVPTPPARRRHGTRDSPLQGQTSHKTPGEALESPATVAPTKSANSSSDTVSVDHDSSGNQGATEPMDTETQEDGRTLVDGRTGSRKKTHTDGKLQVDGRTQGDGAQDRAHASPRTQAGEKAPTDVVTQGSERPQSDRSSWKNLVTQRRVDMQVGQMQAGERWQQDPGDARIQEEEKETQSAAGSIPVAFETQSEQLSMASLSSLPGALKGSPSGCPRESQAIECFEKSTEAPCVQERSDLMLRSEEAAFRSHEDGLLGPPSGNRTYPTQLPPEGHSEHLGGQTHQRSEQEDSLSQCPKKEQPQEPLHVGLSGGHSTGLSQEVPAMPSLPGTGLTSSLQEELPGTAASLHTNTDVPLPSRDQDFPSSAPTLQLGPGSPTQSHPPEAMATSSEGACAKEPNVDGRSSGTRSCDPGLIDSLKNYLLLLLKLSSPETSEARAESQEVADTGGLTSSSTLVPTMEVAGLSPRTSRRILERVENNHLVQSAQTLLLSPCTSRRLTGLLDREVQAGQQALAAAQCSRGPCPTPLTIPAIVVGEEGSAGEDSEERTSQESDKKGLLGEVEGHTVESRTQEPCQEEAMPGEALTGLPAATPEELALGARRKRFLPKVRAGSDGEANKAEERESPTVSPRGPRKGLTPGSPGTPGRERRSPTQARKASMLEVPGAEEEPATGDLVSRSKDSGLDSEPAVDEGKQEALAKQRKAKDLLKAPQVIRKIRVEQFPDSSGSLKLWCQFFNIVSDSVLTWAKDQHPVGEVNRSAGDEGPAALAIVQASPTDCGVYRCTIQNEHGSASTDFCLSPEVLSGFISREEGEVGEEIEMTPMVFAKGLADSGCWGDKLFGRLVSEELRGGGHGLQKASRAKVIYGLEPIFESGRTCIIKVSSLLVFGPSSETSLLGRNYDVTIQGCKIQNMSREYCKIFAAEARAASGFGEVPEIIPLYLIYRPANNIPYATLEEDLGKPLQTYCSRQWGCAGAPAAASSSEALQKCQTFQHWLYQWTNGSFLVTDLTGADWKMTDVQIATKLRGYQGLKESCFPALLDQFASSHQCNTYCDMLGLKPLKGPEAAHPQAKAKGSKSPSAGRKGSQLSPQPQKKGLPSPQGSRKSAPSSRATLQASQAATVQLLGQPPVQDGSSKAQSMR.

Residues 1–37 (MGSRRAAGRGWGLGGRAGAGGDSEDDGPVWTPGPASR) form a disordered region. Positions 9-21 (RGWGLGGRAGAGG) are enriched in gly residues. In terms of domain architecture, Ig-like 1 spans 77 to 173 (PLFETTLKSR…SGVLEVGTMT (97 aa)). Position 229 is a phosphoserine (Ser-229). Disordered stretches follow at residues 237–288 (STPV…NGED), 302–759 (ELGP…CPRE), 785–950 (SEEA…GTRS), 1078–1128 (EGSA…LTGL), and 1147–1244 (PKVR…QRKA). Residues 320–337 (KDEESKPGEQKLELEKAE) show a composition bias toward basic and acidic residues. Residues 339-353 (SQCSSENVVPSTDKP) show a composition bias toward polar residues. Pro residues predominate over residues 402 to 426 (APAPAPVPAPALAPAPVPVPAPTPV). The span at 514-532 (ESTTTSLSSQTSESMAQSL) shows a compositional bias: low complexity. 2 stretches are compositionally biased toward polar residues: residues 557–566 (SPLQGQTSHK) and 731–744 (ETQS…SLSS). The span at 785 to 796 (SEEAAFRSHEDG) shows a compositional bias: basic and acidic residues. Positions 917 to 932 (SPTQSHPPEAMATSSE) are enriched in polar residues. Composition is skewed to basic and acidic residues over residues 1087–1111 (ERTS…ESRT) and 1151–1165 (AGSD…ERES). Phosphoserine is present on Ser-1199. Residues 1231–1244 (DEGKQEALAKQRKA) show a composition bias toward basic and acidic residues. One can recognise an Ig-like 2 domain in the interval 1251-1339 (PQVIRKIRVE…GSASTDFCLS (89 aa)). An intrachain disulfide couples Cys-1273 to Cys-1323. Residues 1367–1600 (KGLADSGCWG…YCDMLGLKPL (234 aa)) enclose the Alpha-type protein kinase domain. The tract at residues 1603–1680 (PEAAHPQAKA…DGSSKAQSMR (78 aa)) is disordered. Composition is skewed to polar residues over residues 1639-1660 (PQGS…QAAT) and 1671-1680 (DGSSKAQSMR).

The protein belongs to the protein kinase superfamily. Alpha-type protein kinase family. ALPK subfamily. In terms of tissue distribution, expressed in the heart and skeletal muscle of adult mice.

It localises to the nucleus. The catalysed reaction is L-seryl-[protein] + ATP = O-phospho-L-seryl-[protein] + ADP + H(+). It carries out the reaction L-threonyl-[protein] + ATP = O-phospho-L-threonyl-[protein] + ADP + H(+). Its function is as follows. Involved in cardiomyocyte differentiation. The protein is Alpha-protein kinase 3 of Mus musculus (Mouse).